An 837-amino-acid polypeptide reads, in one-letter code: Valine--tRNA ligase (837 aa).

The 'HIGH' region motif lies at 46-56 (PNLTGTLHIGH). Positions 514-518 (KMSKS) match the 'KMSKS' region motif. Lys-517 contacts ATP. The stretch at 767 to 837 (VDDTTQRLKS…QLIAKLTKAH (71 aa)) forms a coiled coil.

It belongs to the class-I aminoacyl-tRNA synthetase family. ValS type 1 subfamily. In terms of assembly, monomer.

Its subcellular location is the cytoplasm. It catalyses the reaction tRNA(Val) + L-valine + ATP = L-valyl-tRNA(Val) + AMP + diphosphate. Its function is as follows. Catalyzes the attachment of valine to tRNA(Val). As ValRS can inadvertently accommodate and process structurally similar amino acids such as threonine, to avoid such errors, it has a 'posttransfer' editing activity that hydrolyzes mischarged Thr-tRNA(Val) in a tRNA-dependent manner. The polypeptide is Valine--tRNA ligase (Mycoplasma genitalium (strain ATCC 33530 / DSM 19775 / NCTC 10195 / G37) (Mycoplasmoides genitalium)).